A 292-amino-acid polypeptide reads, in one-letter code: NAD kinase (292 aa).

Aspartate 73 acts as the Proton acceptor in catalysis. NAD(+) is bound by residues 73-74 (DG), 147-148 (NE), histidine 158, arginine 175, aspartate 177, 188-193 (TGYSLS), and glutamine 247.

It belongs to the NAD kinase family. The cofactor is a divalent metal cation.

It localises to the cytoplasm. It catalyses the reaction NAD(+) + ATP = ADP + NADP(+) + H(+). In terms of biological role, involved in the regulation of the intracellular balance of NAD and NADP, and is a key enzyme in the biosynthesis of NADP. Catalyzes specifically the phosphorylation on 2'-hydroxyl of the adenosine moiety of NAD to yield NADP. This chain is NAD kinase, found in Buchnera aphidicola subsp. Schizaphis graminum (strain Sg).